We begin with the raw amino-acid sequence, 715 residues long: uncharacterized protein (715 aa).

Disordered stretches follow at residues 192-216 (ASSVEESNRANNTSPYPPSNSSVTA), 300-348 (NEEV…TSKR), 461-481 (ASSSSFGRSHSHLGTSLRSNE), and 580-630 (FTVS…KPPK). The span at 202–213 (NNTSPYPPSNSS) shows a compositional bias: low complexity. Composition is skewed to polar residues over residues 301-326 (EEVSNNHARSPHSSRACNTIPSNKND) and 472-481 (HLGTSLRSNE). A compositionally biased stretch (low complexity) spans 601–614 (TDSSPSDTISSSPT).

This is an uncharacterized protein from Schizosaccharomyces pombe (strain 972 / ATCC 24843) (Fission yeast).